We begin with the raw amino-acid sequence, 429 residues long: Glutamate-1-semialdehyde 2,1-aminomutase 2 (429 aa).

Lys268 is subject to N6-(pyridoxal phosphate)lysine.

It belongs to the class-III pyridoxal-phosphate-dependent aminotransferase family. HemL subfamily. Homodimer. Pyridoxal 5'-phosphate serves as cofactor.

It localises to the cytoplasm. It catalyses the reaction (S)-4-amino-5-oxopentanoate = 5-aminolevulinate. Its pathway is porphyrin-containing compound metabolism; protoporphyrin-IX biosynthesis; 5-aminolevulinate from L-glutamyl-tRNA(Glu): step 2/2. The protein is Glutamate-1-semialdehyde 2,1-aminomutase 2 of Staphylococcus aureus (strain Mu50 / ATCC 700699).